Reading from the N-terminus, the 2496-residue chain is Hornerin (2496 aa).

The S-100-like stretch occupies residues 1 to 81 (MPKLLESIVT…TEYLLMILKL (81 aa)). 2 EF-hand domains span residues 13–48 (DVFY…LKNP) and 49–84 (DDPD…LTKA). Positions 27, 32, 62, 64, 66, 68, and 73 each coordinate Ca(2+). Residues 82–98 (TKACNKIIGKDYCQASG) are s (spacer). A disordered region spans residues 97–2496 (SGSKQKNHSH…SGQTSGCGSG (2400 aa)). Residues 99-145 (SKQKNHSHQHQEEQSKKETENKEQKGSISSSAGENDSYSRGSRGSNK) form a 1; truncated repeat. The span at 107–123 (QHQEEQSKKETENKEQK) shows a compositional bias: basic and acidic residues. Positions 124-134 (GSISSSAGEND) are enriched in polar residues. Basic residues predominate over residues 144 to 153 (NKSKSKKLRK). 27 repeat units span residues 146 to 231 (SKSK…NGKH), 232 to 321 (GSSS…FGSS), 326 to 400 (SGQS…SEQY), 401 to 491 (GASS…SCCG), 492 to 577 (QSSG…SGRY), 578 to 668 (GASS…SGSR), 669 to 748 (HGSG…SGRC), 749 to 839 (GASS…SCCG), 840 to 926 (QSSG…SGRY), 927 to 1017 (GASS…SGSR), 1018 to 1097 (HGSG…SGRC), 1098 to 1188 (GASS…SCCG), 1189 to 1274 (QSSG…SGRY), 1275 to 1365 (GASS…SGSR), 1366 to 1445 (HGSG…SGRC), 1446 to 1536 (GASS…SCCG), 1537 to 1622 (QSSG…SGRY), 1623 to 1713 (GASS…SGSR), 1714 to 1793 (HGSG…SGRC), 1794 to 1884 (GASS…SCCG), 1885 to 1970 (QSSG…SGRY), 1971 to 2061 (GASS…SGSR), 2062 to 2141 (HGSG…SGRC), 2142 to 2232 (GASS…SGSR), 2233 to 2312 (HGSG…SGRY), 2313 to 2403 (GASS…SGSR), and 2410 to 2496 (QFPI…CGSG). Low complexity-rich tracts occupy residues 183–194 (SGFSNSSGNGRP), 200–246 (SGFP…SGHS), and 270–286 (RESS…SEEP). 2 stretches are compositionally biased toward polar residues: residues 294 to 319 (RKNS…QGFG) and 326 to 355 (SGQS…SSES). 3 stretches are compositionally biased toward low complexity: residues 362 to 379 (VSGS…STSG), 394 to 415 (SSGS…SGQS), and 423 to 448 (SGSR…QQFG). Positions 449 to 464 (SGSGRSSGFSQGGSGQ) are enriched in gly residues. Low complexity predominate over residues 465-565 (GRSSRGGQQG…GQTSSSTRQG (101 aa)). Phosphoserine is present on residues Ser-506 and Ser-508. Residues 566–576 (SGQGQASGSGR) are compositionally biased toward gly residues. 2 stretches are compositionally biased toward low complexity: residues 577-593 (YGAS…GQST) and 600-625 (SGSR…QRYG). Over residues 626–641 (SGSGESSGFSQGGSGQ) the composition is skewed to gly residues. Low complexity-rich tracts occupy residues 642–670 (GRSS…SRHG) and 679–713 (SGQQ…GSGS). Arg-646 carries the post-translational modification Omega-N-methylarginine. Phosphoserine is present on Ser-716. The span at 723-736 (GSTSGQTASSTRQG) shows a compositional bias: low complexity. Positions 737–747 (SGQGQASGSGR) are enriched in gly residues. Composition is skewed to low complexity over residues 748-764 (CGAS…GQST), 771-796 (SGSR…QRFG), 804-884 (GFSQ…SRPA), and 891-914 (SGRS…TRQG). Ser-815 is subject to Phosphoserine. The segment covering 915–925 (SGQGQASGSGR) has biased composition (gly residues). Low complexity-rich tracts occupy residues 926–942 (YGAS…GQST) and 949–974 (SGSR…QRYG). The segment covering 975–990 (SGSGESSGFSQGGSGQ) has biased composition (gly residues). Low complexity-rich tracts occupy residues 991 to 1019 (GRSS…SRHG), 1028 to 1062 (SGQQ…GSGS), and 1072 to 1085 (GSTS…TRQG). Arg-995 carries the post-translational modification Omega-N-methylarginine. A compositionally biased stretch (gly residues) spans 1086–1096 (SGQGQASGSGR). Composition is skewed to low complexity over residues 1097-1113 (CGAS…GQST), 1120-1145 (SGSR…QRFG), and 1153-1262 (GFSQ…TRQG). At Ser-1229 the chain carries Phosphoserine. Positions 1263-1273 (SGQGQASGSGR) are enriched in gly residues. The segment covering 1281-1292 (TSGCRSGQSTRY) has biased composition (polar residues). The span at 1298-1322 (GSRNSSTQSRGRSTSRESSTSQRYG) shows a compositional bias: low complexity. The span at 1323–1338 (SGSGESSGFSQGGSGQ) shows a compositional bias: gly residues. 3 stretches are compositionally biased toward low complexity: residues 1339-1367 (GRSS…SRHG), 1376-1410 (SGQQ…GSGS), and 1420-1433 (GSTS…TRQG). Arg-1343 carries the post-translational modification Omega-N-methylarginine. A compositionally biased stretch (gly residues) spans 1434 to 1444 (SGQGQASGSGR). Low complexity-rich tracts occupy residues 1445 to 1461 (CGAS…GQST), 1468 to 1493 (SGSR…QRFG), and 1501 to 1610 (GFSQ…TRQG). 2 positions are modified to phosphoserine: Ser-1551 and Ser-1553. The segment covering 1611–1621 (SGQGQASGSGR) has biased composition (gly residues). Composition is skewed to low complexity over residues 1622 to 1631 (YGASSGQTSG) and 1645 to 1670 (SGSR…QRCG). Position 1650 is a phosphoserine (Ser-1650). The span at 1671–1686 (SGSGESSGFSQGGSGQ) shows a compositional bias: gly residues. 3 stretches are compositionally biased toward low complexity: residues 1687-1715 (GRSS…SRHG), 1724-1758 (SGQQ…GSGS), and 1768-1781 (GSTS…TRQG). At Arg-1691 the chain carries Omega-N-methylarginine. Residues 1782 to 1792 (SGQGQASGSGR) show a composition bias toward gly residues. A compositionally biased stretch (polar residues) spans 1800 to 1811 (TSGCGSDQSTRY). Low complexity-rich tracts occupy residues 1816–1841 (SGSR…QRFG) and 1849–1958 (GFSQ…TRQG). Residues 1959–1969 (SGQGQASGSGR) show a composition bias toward gly residues. Low complexity-rich tracts occupy residues 1970-1986 (YGAS…GQST) and 1993-2018 (SGSR…QRYG). At Ser-2011 the chain carries Phosphoserine. Residues 2019–2034 (SGSGESSGFSQGGSGQ) show a composition bias toward gly residues. Composition is skewed to low complexity over residues 2035 to 2063 (GRSS…SRHG) and 2072 to 2106 (SGQQ…GSGS). At Arg-2039 the chain carries Omega-N-methylarginine. 2 positions are modified to phosphoserine: Ser-2109 and Ser-2124. Residues 2116–2129 (GSTSGQTASSTRQG) are compositionally biased toward low complexity. Over residues 2130–2140 (SGQGQASGSGR) the composition is skewed to gly residues. Low complexity-rich tracts occupy residues 2141–2157 (CGAS…GQST) and 2164–2189 (SGSR…QRYG). Residues 2190–2205 (SGSGESSGFSQGGSGQ) show a composition bias toward gly residues. 2 stretches are compositionally biased toward low complexity: residues 2206–2234 (GRSS…SRHG) and 2243–2300 (SGQQ…TRQG). Omega-N-methylarginine is present on Arg-2210. Residues 2301-2311 (SGQGQASGSGR) show a composition bias toward gly residues. Composition is skewed to low complexity over residues 2312–2328 (YGAS…GQST) and 2335–2360 (SGSR…QRYG). Residue Ser-2353 is modified to Phosphoserine. A compositionally biased stretch (gly residues) spans 2361–2376 (SGSGESSGFSQGGSGQ). 3 stretches are compositionally biased toward low complexity: residues 2377–2405 (GRSS…SRHG), 2414–2448 (SGQQ…GSGS), and 2458–2471 (GSTS…TRQG). Arg-2381 bears the Omega-N-methylarginine mark. The segment covering 2472–2482 (SGQGQASGSGR) has biased composition (gly residues).

Belongs to the S100-fused protein family. This sequence in the N-terminal section; belongs to the S-100 family. Post-translationally, processed during the process of epidermal differentiation. Forms covalent cross-links mediated by transglutaminase TGM3, between glutamine and the epsilon-amino group of lysine residues (in vitro). Embryonic skin. Highest level in the adult forestomach followed by the skin. Lower levels in the tongue, esophagus. Detected in the granular and cornified layers of the mature epidermis.

Its subcellular location is the cytoplasmic granule. Component of the epidermal cornified cell envelopes. The protein is Hornerin (Hrnr) of Mus musculus (Mouse).